We begin with the raw amino-acid sequence, 284 residues long: Pantothenate synthetase (284 aa).

An ATP-binding site is contributed by 30 to 37 (MGALHDGH). His-37 (proton donor) is an active-site residue. Gln-61 provides a ligand contact to (R)-pantoate. A beta-alanine-binding site is contributed by Gln-61. Residue 147 to 150 (GEKD) participates in ATP binding. Residue Gln-153 coordinates (R)-pantoate. ATP contacts are provided by residues Val-176 and 184-187 (KSSR).

Belongs to the pantothenate synthetase family. In terms of assembly, homodimer.

It localises to the cytoplasm. The catalysed reaction is (R)-pantoate + beta-alanine + ATP = (R)-pantothenate + AMP + diphosphate + H(+). It functions in the pathway cofactor biosynthesis; (R)-pantothenate biosynthesis; (R)-pantothenate from (R)-pantoate and beta-alanine: step 1/1. Its function is as follows. Catalyzes the condensation of pantoate with beta-alanine in an ATP-dependent reaction via a pantoyl-adenylate intermediate. The protein is Pantothenate synthetase of Chloroherpeton thalassium (strain ATCC 35110 / GB-78).